The sequence spans 396 residues: Elongation factor Tu 1 (396 aa).

The tr-type G domain maps to 10–206; the sequence is KPHVNVGTIG…TLDTYIPEPE (197 aa). The tract at residues 19 to 26 is G1; that stretch reads GHVDHGKT. Position 19–26 (19–26) interacts with GTP; sequence GHVDHGKT. Residue T26 coordinates Mg(2+). The segment at 60–64 is G2; it reads GITIN. A G3 region spans residues 81 to 84; that stretch reads DCPG. Residues 81–85 and 136–139 contribute to the GTP site; these read DCPGH and NKCD. Residues 136–139 form a G4 region; it reads NKCD. The G5 stretch occupies residues 174 to 176; it reads SAL.

Belongs to the TRAFAC class translation factor GTPase superfamily. Classic translation factor GTPase family. EF-Tu/EF-1A subfamily. As to quaternary structure, monomer.

Its subcellular location is the cytoplasm. It carries out the reaction GTP + H2O = GDP + phosphate + H(+). In terms of biological role, GTP hydrolase that promotes the GTP-dependent binding of aminoacyl-tRNA to the A-site of ribosomes during protein biosynthesis. This Psychrobacter sp. (strain PRwf-1) protein is Elongation factor Tu 1.